We begin with the raw amino-acid sequence, 960 residues long: Cyclin-dependent kinase-like 5 (960 aa).

Positions 13–297 (FEILGVVGEG…TEQCLNHPTF (285 aa)) constitute a Protein kinase domain. ATP-binding positions include 19 to 27 (VGEGAYGVV) and Lys42. Asp135 functions as the Proton acceptor in the catalytic mechanism. Disordered stretches follow at residues 300–349 (QRLL…IQNL), 382–566 (KTYQ…RHSK), 646–834 (SPQP…TQSQ), and 848–960 (ASNH…ETAL). Composition is skewed to polar residues over residues 319–336 (ESST…TALQ) and 382–402 (KTYQ…NNNI). Ser407 bears the Phosphoserine mark. Residues 407 to 417 (SPKEAKSKTEF) are compositionally biased toward basic and acidic residues. Polar residues-rich tracts occupy residues 434-462 (LKSN…QPNE), 473-482 (IPQSSRSPSY), and 510-548 (EPST…SGRN). Ser479 is subject to Phosphoserine. 2 stretches are compositionally biased toward basic and acidic residues: residues 549-559 (NRNEGTLDSRR) and 679-704 (QKSE…RHLY). Ser720 is subject to Phosphoserine. Over residues 728-748 (HENNVSTRVSSLPSESSSGTN) the composition is skewed to polar residues. A Phosphoserine modification is found at Ser761. The span at 769 to 778 (EQLKEKEKQG) shows a compositional bias: basic and acidic residues. Polar residues predominate over residues 791 to 816 (QTVPNSDSPDLLTLQKSIHSASTPSS). Positions 817-827 (RPKEWRPEKIS) are enriched in basic and acidic residues. Polar residues-rich tracts occupy residues 862–872 (LTAQQTKNSFS), 880–890 (SQASGGSSNIR), and 914–928 (SSVT…SYSE).

This sequence belongs to the protein kinase superfamily. CMGC Ser/Thr protein kinase family. CDC2/CDKX subfamily. As to quaternary structure, interacts with MECP2. Autophosphorylated. In terms of tissue distribution, expressed in brain, lung, kidney, prostate, ovary, placenta, pancreas and testis. Predominant transcript in brain.

The protein resides in the nucleus. It localises to the cytoplasm. Its subcellular location is the cytoskeleton. The protein localises to the cilium basal body. It is found in the microtubule organizing center. The protein resides in the centrosome. The enzyme catalyses L-seryl-[protein] + ATP = O-phospho-L-seryl-[protein] + ADP + H(+). It catalyses the reaction L-threonyl-[protein] + ATP = O-phospho-L-threonyl-[protein] + ADP + H(+). Its function is as follows. Mediates phosphorylation of MECP2. May regulate ciliogenesis. This chain is Cyclin-dependent kinase-like 5, found in Homo sapiens (Human).